Here is a 446-residue protein sequence, read N- to C-terminus: Probable glycine dehydrogenase (decarboxylating) subunit 1 (446 aa).

This sequence belongs to the GcvP family. N-terminal subunit subfamily. As to quaternary structure, the glycine cleavage system is composed of four proteins: P, T, L and H. In this organism, the P 'protein' is a heterodimer of two subunits.

The enzyme catalyses N(6)-[(R)-lipoyl]-L-lysyl-[glycine-cleavage complex H protein] + glycine + H(+) = N(6)-[(R)-S(8)-aminomethyldihydrolipoyl]-L-lysyl-[glycine-cleavage complex H protein] + CO2. Its function is as follows. The glycine cleavage system catalyzes the degradation of glycine. The P protein binds the alpha-amino group of glycine through its pyridoxal phosphate cofactor; CO(2) is released and the remaining methylamine moiety is then transferred to the lipoamide cofactor of the H protein. The sequence is that of Probable glycine dehydrogenase (decarboxylating) subunit 1 from Coxiella burnetii (strain CbuK_Q154) (Coxiella burnetii (strain Q154)).